Here is a 564-residue protein sequence, read N- to C-terminus: CTP synthase (564 aa).

The amidoligase domain stretch occupies residues 1–265 (MTKFVFVTGG…DEIVCHRLGI (265 aa)). Position 13 (Ser-13) interacts with CTP. Residue Ser-13 coordinates UTP. ATP-binding positions include 14–19 (SLGKGI) and Asp-71. Mg(2+) contacts are provided by Asp-71 and Glu-139. Residues 146–148 (DIE), 186–191 (KTKPTQ), and Lys-222 each bind CTP. UTP is bound by residues 186–191 (KTKPTQ) and Lys-222. The Glutamine amidotransferase type-1 domain occupies 290-543 (SIALVGKYVD…VRAAISFADK (254 aa)). Position 351 (Gly-351) interacts with L-glutamine. Residue Cys-378 is the Nucleophile; for glutamine hydrolysis of the active site. L-glutamine contacts are provided by residues 379–382 (LGMQ), Glu-402, and Arg-469. Catalysis depends on residues His-516 and Glu-518.

The protein belongs to the CTP synthase family. In terms of assembly, homotetramer.

The catalysed reaction is UTP + L-glutamine + ATP + H2O = CTP + L-glutamate + ADP + phosphate + 2 H(+). The enzyme catalyses L-glutamine + H2O = L-glutamate + NH4(+). It catalyses the reaction UTP + NH4(+) + ATP = CTP + ADP + phosphate + 2 H(+). The protein operates within pyrimidine metabolism; CTP biosynthesis via de novo pathway; CTP from UDP: step 2/2. With respect to regulation, allosterically activated by GTP, when glutamine is the substrate; GTP has no effect on the reaction when ammonia is the substrate. The allosteric effector GTP functions by stabilizing the protein conformation that binds the tetrahedral intermediate(s) formed during glutamine hydrolysis. Inhibited by the product CTP, via allosteric rather than competitive inhibition. Its function is as follows. Catalyzes the ATP-dependent amination of UTP to CTP with either L-glutamine or ammonia as the source of nitrogen. Regulates intracellular CTP levels through interactions with the four ribonucleotide triphosphates. The protein is CTP synthase of Nitrosomonas eutropha (strain DSM 101675 / C91 / Nm57).